The sequence spans 931 residues: Protein translocase subunit SecA (931 aa).

ATP is bound by residues Q87, 105–109 (GEGKT), and D515. Zn(2+) is bound by residues C915, C917, C926, and H927.

This sequence belongs to the SecA family. Monomer and homodimer. Part of the essential Sec protein translocation apparatus which comprises SecA, SecYEG and auxiliary proteins SecDF-YajC and YidC. Zn(2+) is required as a cofactor.

It is found in the cell inner membrane. The protein resides in the cytoplasm. The enzyme catalyses ATP + H2O + cellular proteinSide 1 = ADP + phosphate + cellular proteinSide 2.. Its function is as follows. Part of the Sec protein translocase complex. Interacts with the SecYEG preprotein conducting channel. Has a central role in coupling the hydrolysis of ATP to the transfer of proteins into and across the cell membrane, serving both as a receptor for the preprotein-SecB complex and as an ATP-driven molecular motor driving the stepwise translocation of polypeptide chains across the membrane. The chain is Protein translocase subunit SecA from Burkholderia pseudomallei (strain K96243).